The following is a 223-amino-acid chain: Small ribosomal subunit protein uS3 (223 aa).

The region spanning 39–107 (VREFLHKKLA…PVQINIEEVR (69 aa)) is the KH type-2 domain.

Belongs to the universal ribosomal protein uS3 family. In terms of assembly, part of the 30S ribosomal subunit. Forms a tight complex with proteins S10 and S14.

Functionally, binds the lower part of the 30S subunit head. Binds mRNA in the 70S ribosome, positioning it for translation. This chain is Small ribosomal subunit protein uS3, found in Francisella tularensis subsp. holarctica (strain FTNF002-00 / FTA).